A 207-amino-acid polypeptide reads, in one-letter code: Tereporin-Ts1 (207 aa).

The first 11 residues, 1-11, serve as a signal peptide directing secretion; it reads VIFALVLGNAS. Positions 35 to 54 are N-terminal region; the sequence is SAGTSLASTILSGLAASGYR. Phosphocholine-binding residues include Gly111, Ser129, Pro131, Tyr164, and Tyr165.

This sequence belongs to the actinoporin family. Conoidea subfamily. In terms of assembly, octamer or nonamer in membranes. Monomer in the soluble state. In terms of tissue distribution, expressed by the venom duct.

The protein localises to the secreted. The protein resides in the nematocyst. Its subcellular location is the target cell membrane. Pore-forming protein that forms pores of around 1 nm and causes cardiac stimulation and cytolysis. In Terebra subulata (Chocolate spotted auger), this protein is Tereporin-Ts1.